Here is a 187-residue protein sequence, read N- to C-terminus: dTTP/UTP pyrophosphatase (187 aa).

Aspartate 65 functions as the Proton acceptor in the catalytic mechanism.

This sequence belongs to the Maf family. YhdE subfamily. Requires a divalent metal cation as cofactor.

It localises to the cytoplasm. It carries out the reaction dTTP + H2O = dTMP + diphosphate + H(+). The catalysed reaction is UTP + H2O = UMP + diphosphate + H(+). Its function is as follows. Nucleoside triphosphate pyrophosphatase that hydrolyzes dTTP and UTP. May have a dual role in cell division arrest and in preventing the incorporation of modified nucleotides into cellular nucleic acids. This chain is dTTP/UTP pyrophosphatase, found in Deinococcus geothermalis (strain DSM 11300 / CIP 105573 / AG-3a).